Here is a 200-residue protein sequence, read N- to C-terminus: NADH-quinone oxidoreductase subunit C (200 aa).

The protein belongs to the complex I 30 kDa subunit family. As to quaternary structure, NDH-1 is composed of 14 different subunits. Subunits NuoB, C, D, E, F, and G constitute the peripheral sector of the complex.

The protein localises to the cell inner membrane. It catalyses the reaction a quinone + NADH + 5 H(+)(in) = a quinol + NAD(+) + 4 H(+)(out). NDH-1 shuttles electrons from NADH, via FMN and iron-sulfur (Fe-S) centers, to quinones in the respiratory chain. The immediate electron acceptor for the enzyme in this species is believed to be ubiquinone. Couples the redox reaction to proton translocation (for every two electrons transferred, four hydrogen ions are translocated across the cytoplasmic membrane), and thus conserves the redox energy in a proton gradient. The protein is NADH-quinone oxidoreductase subunit C of Burkholderia thailandensis (strain ATCC 700388 / DSM 13276 / CCUG 48851 / CIP 106301 / E264).